The following is a 256-amino-acid chain: Homeobox protein Hox-D13a (256 aa).

Residues 191-250 (GRKKRVPYTKFQLKELEREYNTTKFITKENRRRIASSTNLSERQVTIWFQNRRVKDKKRP) constitute a DNA-binding region (homeobox).

Belongs to the Abd-B homeobox family.

Its subcellular location is the nucleus. In terms of biological role, sequence-specific transcription factor which is part of a developmental regulatory system that provides cells with specific positional identities on the anterior-posterior axis. The sequence is that of Homeobox protein Hox-D13a (hoxd13a) from Danio rerio (Zebrafish).